We begin with the raw amino-acid sequence, 337 residues long: Probable arabinose 5-phosphate isomerase (337 aa).

The SIS domain occupies 58-201; it reads VIDLILACEG…AVSLITARNF (144 aa). Residues 92–93, H99, H105, 131–140, 165–167, T237, and D290 contribute to the substrate site; these read GT, KLIPSLKNFG, and TVE. H99 is a Zn(2+) binding site. The region spanning 227–284 is the CBS 1 domain; sequence MQTRLPTILPTTNFTDCLTVMNEGRMGVALVMENEQLKGIITDGDIRRALTANGAGTL. The CBS 2 domain occupies 292 to 337; that stretch reads MTSSPKTIHQDEFLSKAEDFMKAKKIHSLVVVNDENHVVGLVEFSS.

Belongs to the SIS family. GutQ/KpsF subfamily.

It catalyses the reaction D-arabinose 5-phosphate = D-ribulose 5-phosphate. In terms of biological role, catalyzes the reversible aldol-ketol isomerization between D-ribulose 5-phosphate (Ru5P) and D-arabinose 5-phosphate (A5P). The protein is Probable arabinose 5-phosphate isomerase of Haemophilus influenzae (strain ATCC 51907 / DSM 11121 / KW20 / Rd).